A 533-amino-acid chain; its full sequence is Phospho-2-dehydro-3-deoxyheptonate aldolase 1, chloroplastic (533 aa).

A chloroplast-targeting transit peptide spans 1 to 57 (MALSTNSTTSSLLPKTPLVQQPLLKNASLPTTTKAIRFIQPISAIHSSDSSKNTPIV). Positions 47–56 (SSDSSKNTPI) are enriched in polar residues. The tract at residues 47 to 70 (SSDSSKNTPIVSAKPSSPPAATST) is disordered. Low complexity predominate over residues 57–70 (VSAKPSSPPAATST). Mn(2+) is bound at residue Cys145. Substrate-binding positions include Arg184, 343 to 344 (ER), Lys366, and Arg397. Mn(2+)-binding residues include His429, Glu471, and Asp501.

The protein belongs to the class-II DAHP synthase family. As to quaternary structure, homodimer. Mn(2+) is required as a cofactor. Mostly expressed in flowers, especially in petal limbs and tubes, and, to a lower extent, in roots, stems, stigmas, anthers, leaves and sepals.

Its subcellular location is the plastid. It is found in the chloroplast. It catalyses the reaction D-erythrose 4-phosphate + phosphoenolpyruvate + H2O = 7-phospho-2-dehydro-3-deoxy-D-arabino-heptonate + phosphate. The protein operates within metabolic intermediate biosynthesis; chorismate biosynthesis; chorismate from D-erythrose 4-phosphate and phosphoenolpyruvate: step 1/7. In terms of biological role, involved in the production of volatile organic compounds (VOCs), including floral volatile benzenoids and phenylpropanoids (FVBP), in flowers of fragrant cultivars (e.g. cv. Mitchell and cv. V26), scent attracting pollinators (e.g. the night-active hawkmoth pollinator Manduca sexta). Catalyzes an aldol-like condensation reaction between phosphoenolpyruvate (PEP) and D-erythrose 4-phosphate (E4P) to generate 3-deoxy-D-arabino-heptulosonate 7-phosphate (DAH7P) and inorganic phosphate. This chain is Phospho-2-dehydro-3-deoxyheptonate aldolase 1, chloroplastic, found in Petunia hybrida (Petunia).